The following is a 152-amino-acid chain: Heavy metal-associated isoprenylated plant protein 22 (152 aa).

An HMA domain is found at 28-91; the sequence is MQTVNIKVKI…TVQSTGKKKA (64 aa). 2 residues coordinate a metal cation: cysteine 39 and cysteine 42. Residues 123 to 152 are disordered; sequence SEQAQAQPGSTDDKLMSLFSDENPNACTVM. Positions 142 to 152 are enriched in polar residues; the sequence is SDENPNACTVM. The residue at position 149 (cysteine 149) is a Cysteine methyl ester. Residue cysteine 149 is the site of S-farnesyl cysteine attachment. A propeptide spans 150–152 (removed in mature form); the sequence is TVM.

It belongs to the HIPP family. Interacts with ZHD11/HB29. As to expression, expressed in lateral roots and mature anthers.

Its subcellular location is the membrane. In terms of biological role, heavy-metal-binding protein. Binds cadmium. May be involved in cadmium transport and play a role in cadmium detoxification. The chain is Heavy metal-associated isoprenylated plant protein 22 from Arabidopsis thaliana (Mouse-ear cress).